A 243-amino-acid chain; its full sequence is tRNA (guanine-N(1)-)-methyltransferase (243 aa).

S-adenosyl-L-methionine contacts are provided by residues glycine 108 and 127–132; that span reads LGDFVL.

It belongs to the RNA methyltransferase TrmD family. Homodimer.

It localises to the cytoplasm. The catalysed reaction is guanosine(37) in tRNA + S-adenosyl-L-methionine = N(1)-methylguanosine(37) in tRNA + S-adenosyl-L-homocysteine + H(+). In terms of biological role, specifically methylates guanosine-37 in various tRNAs. This Streptococcus pyogenes serotype M5 (strain Manfredo) protein is tRNA (guanine-N(1)-)-methyltransferase.